The chain runs to 320 residues: ATP-dependent 6-phosphofructokinase (320 aa).

G12 provides a ligand contact to ATP. 22–26 (RGVVR) contributes to the ADP binding site. Residues 73-74 (RF) and 103-106 (GDGS) contribute to the ATP site. D104 provides a ligand contact to Mg(2+). 126-128 (TID) lines the substrate pocket. D128 serves as the catalytic Proton acceptor. An ADP-binding site is contributed by R155. Substrate is bound by residues R163 and 170-172 (MGR). Residues 186 to 188 (GCE), K212, and 214 to 216 (KKH) contribute to the ADP site. Residues E223, R244, and 250 to 253 (HIQR) contribute to the substrate site.

It belongs to the phosphofructokinase type A (PFKA) family. ATP-dependent PFK group I subfamily. Prokaryotic clade 'B1' sub-subfamily. As to quaternary structure, homotetramer. Mg(2+) is required as a cofactor.

It is found in the cytoplasm. It carries out the reaction beta-D-fructose 6-phosphate + ATP = beta-D-fructose 1,6-bisphosphate + ADP + H(+). It participates in carbohydrate degradation; glycolysis; D-glyceraldehyde 3-phosphate and glycerone phosphate from D-glucose: step 3/4. Allosterically activated by ADP and other diphosphonucleosides, and allosterically inhibited by phosphoenolpyruvate. Its function is as follows. Catalyzes the phosphorylation of D-fructose 6-phosphate to fructose 1,6-bisphosphate by ATP, the first committing step of glycolysis. This is ATP-dependent 6-phosphofructokinase from Photobacterium profundum (strain SS9).